A 62-amino-acid polypeptide reads, in one-letter code: Large ribosomal subunit protein uL30 (62 aa).

The protein belongs to the universal ribosomal protein uL30 family. In terms of assembly, part of the 50S ribosomal subunit.

This chain is Large ribosomal subunit protein uL30, found in Geobacillus kaustophilus (strain HTA426).